Here is a 204-residue protein sequence, read N- to C-terminus: Holliday junction branch migration complex subunit RuvA (204 aa).

Residues 1–67 (MIAFLSGHLV…ETELVLYGFG (67 aa)) are domain I. Residues 68–146 (SPAERDVFVE…HWRQGLENAD (79 aa)) form a domain II region. The flexible linker stretch occupies residues 147-156 (RPLAGGPPPA). The domain III stretch occupies residues 156–204 (AIREEVEMALLALGYSLQEIQAALQALPSQPRPTEEWLRDAITYLSRQP).

This sequence belongs to the RuvA family. In terms of assembly, homotetramer. Forms an RuvA(8)-RuvB(12)-Holliday junction (HJ) complex. HJ DNA is sandwiched between 2 RuvA tetramers; dsDNA enters through RuvA and exits via RuvB. An RuvB hexamer assembles on each DNA strand where it exits the tetramer. Each RuvB hexamer is contacted by two RuvA subunits (via domain III) on 2 adjacent RuvB subunits; this complex drives branch migration. In the full resolvosome a probable DNA-RuvA(4)-RuvB(12)-RuvC(2) complex forms which resolves the HJ.

The protein resides in the cytoplasm. Functionally, the RuvA-RuvB-RuvC complex processes Holliday junction (HJ) DNA during genetic recombination and DNA repair, while the RuvA-RuvB complex plays an important role in the rescue of blocked DNA replication forks via replication fork reversal (RFR). RuvA specifically binds to HJ cruciform DNA, conferring on it an open structure. The RuvB hexamer acts as an ATP-dependent pump, pulling dsDNA into and through the RuvAB complex. HJ branch migration allows RuvC to scan DNA until it finds its consensus sequence, where it cleaves and resolves the cruciform DNA. This Synechococcus sp. (strain JA-3-3Ab) (Cyanobacteria bacterium Yellowstone A-Prime) protein is Holliday junction branch migration complex subunit RuvA.